We begin with the raw amino-acid sequence, 284 residues long: ATP phosphoribosyltransferase (284 aa).

It belongs to the ATP phosphoribosyltransferase family. Long subfamily. Equilibrium between an active dimeric form, an inactive hexameric form and higher aggregates. Interconversion between the various forms is largely reversible and is influenced by the natural substrates and inhibitors of the enzyme. Requires Mg(2+) as cofactor.

Its subcellular location is the cytoplasm. It catalyses the reaction 1-(5-phospho-beta-D-ribosyl)-ATP + diphosphate = 5-phospho-alpha-D-ribose 1-diphosphate + ATP. It functions in the pathway amino-acid biosynthesis; L-histidine biosynthesis; L-histidine from 5-phospho-alpha-D-ribose 1-diphosphate: step 1/9. Its activity is regulated as follows. Feedback inhibited by histidine. Catalyzes the condensation of ATP and 5-phosphoribose 1-diphosphate to form N'-(5'-phosphoribosyl)-ATP (PR-ATP). Has a crucial role in the pathway because the rate of histidine biosynthesis seems to be controlled primarily by regulation of HisG enzymatic activity. This chain is ATP phosphoribosyltransferase (hisG), found in Mycobacterium bovis (strain ATCC BAA-935 / AF2122/97).